Reading from the N-terminus, the 721-residue chain is Far upstream element-binding protein 2 (721 aa).

The disordered stretch occupies residues 1–148 (MSDYSTGGPP…HPPPRTSMTE (148 aa)). Position 2 is an N-acetylserine (Ser2). A compositionally biased stretch (pro residues) spans 8–17 (GPPPGPPPPA). 2 stretches are compositionally biased toward gly residues: residues 18-28 (GGGGGAAGAGG) and 36-69 (GAGD…GGPG). Arg40 bears the Omega-N-methylarginine mark. Lys88 is subject to N6-acetyllysine. Thr101 is subject to Phosphothreonine. Residues 111 to 123 (RQLEDGDQPDSKK) are compositionally biased toward basic and acidic residues. Residue Lys122 forms a Glycyl lysine isopeptide (Lys-Gly) (interchain with G-Cter in SUMO1); alternate linkage. Lys122 participates in a covalent cross-link: Glycyl lysine isopeptide (Lys-Gly) (interchain with G-Cter in SUMO2); alternate. Ser126, Ser130, Ser182, Ser185, Ser194, and Ser275 each carry phosphoserine. KH domains follow at residues 145–209 (SMTE…KMML), 234–300 (GTVQ…CEMV), and 323–387 (GGGI…ARII). The disordered stretch occupies residues 394–422 (LRSGPPGPPGAPGMPPGGRGRGRGQGNWG). Residues 398-408 (PPGPPGAPGMP) show a composition bias toward pro residues. A compositionally biased stretch (gly residues) spans 409-422 (PGGRGRGRGQGNWG). Omega-N-methylarginine occurs at positions 412, 414, 416, and 443. One can recognise a KH 4 domain in the interval 425–492 (GGEMTFSIPT…QQIDHAKQLI (68 aa)). A Phosphoserine modification is found at Ser481. The interval 498–570 (GPLCPVGPGP…HDPNKAAAAA (73 aa)) is disordered. Composition is skewed to pro residues over residues 502–521 (PVGP…PFHP) and 529–543 (PGAP…PHQY). Copy 1 of the repeat occupies 572–583 (DPNAAWAAYYSH). The segment at 572–685 (DPNAAWAAYY…SAAWAEYYRQ (114 aa)) is 4 X 12 AA imperfect repeats. Residues 588-614 (PPGPVPGPAPAPAAPPAQGEPPQPPPT) are compositionally biased toward pro residues. 3 disordered regions span residues 588–650 (PPGP…KAWE), 659–678 (VATG…YSAA), and 688–721 (AYYG…ELHL). 3 repeat units span residues 618–629 (DYTKAWEEYYKK), 644–655 (DYTKAWEEYYKK), and 674–685 (DYSAAWAEYYRQ).

The protein belongs to the KHSRP family. In terms of assembly, part of a ternary complex containing FUBP2, PTBP1, PTBP2 and HNRPH1. Interacts with PARN. Interacts with PQBP1.

Its subcellular location is the nucleus. It localises to the cytoplasm. Part of a ternary complex that binds to the downstream control sequence (DCS) of the pre-mRNA. Mediates exon inclusion in transcripts that are subject to tissue-specific alternative splicing. May interact with single-stranded DNA from the far-upstream element (FUSE). May activate gene expression. Also involved in degradation of inherently unstable mRNAs that contain AU-rich elements (AREs) in their 3'-UTR, possibly by recruiting degradation machinery to ARE-containing mRNAs. Binds to the dendritic targeting element and may play a role in mRNA trafficking. This is Far upstream element-binding protein 2 (Khsrp) from Rattus norvegicus (Rat).